Consider the following 205-residue polypeptide: Molybdenum cofactor guanylyltransferase (205 aa).

Residues 14-16 (LAG), Lys-27, Asp-77, and Asp-107 contribute to the GTP site. A Mg(2+)-binding site is contributed by Asp-107.

This sequence belongs to the MobA family. As to quaternary structure, monomer. Mg(2+) serves as cofactor.

Its subcellular location is the cytoplasm. It carries out the reaction Mo-molybdopterin + GTP + H(+) = Mo-molybdopterin guanine dinucleotide + diphosphate. In terms of biological role, transfers a GMP moiety from GTP to Mo-molybdopterin (Mo-MPT) cofactor (Moco or molybdenum cofactor) to form Mo-molybdopterin guanine dinucleotide (Mo-MGD) cofactor. The protein is Molybdenum cofactor guanylyltransferase of Burkholderia ambifaria (strain MC40-6).